The chain runs to 334 residues: Ornithine carbamoyltransferase (334 aa).

Carbamoyl phosphate contacts are provided by residues S57–T60, Q84, R108, and H135–Q138. L-ornithine-binding positions include N169, D233, and S237–M238. Carbamoyl phosphate-binding positions include C275–L276 and R320.

This sequence belongs to the aspartate/ornithine carbamoyltransferase superfamily. OTCase family.

The protein localises to the cytoplasm. It catalyses the reaction carbamoyl phosphate + L-ornithine = L-citrulline + phosphate + H(+). The protein operates within amino-acid biosynthesis; L-arginine biosynthesis; L-arginine from L-ornithine and carbamoyl phosphate: step 1/3. Functionally, reversibly catalyzes the transfer of the carbamoyl group from carbamoyl phosphate (CP) to the N(epsilon) atom of ornithine (ORN) to produce L-citrulline. In Aeromonas hydrophila subsp. hydrophila (strain ATCC 7966 / DSM 30187 / BCRC 13018 / CCUG 14551 / JCM 1027 / KCTC 2358 / NCIMB 9240 / NCTC 8049), this protein is Ornithine carbamoyltransferase.